Here is a 319-residue protein sequence, read N- to C-terminus: Shiga-like toxin 2 subunit A (319 aa).

The signal sequence occupies residues 1–22 (MKCILFKWVLCLLLGFSSVSYS). An A1 region spans residues 23 to 272 (REFTIDFSTQ…CHHQGARSVR (250 aa)). The active site involves Glu189. The cysteines at positions 263 and 282 are disulfide-linked. Residues 273-314 (AVNEESQPECQITGDRPVIKINNTLWESNTAAAFLNRKSQFL) form an A2 region.

This sequence belongs to the ribosome-inactivating protein family. Shiga-like toxin contains a single A subunit and multiple copies of a B subunit.

The protein localises to the secreted. The catalysed reaction is Endohydrolysis of the N-glycosidic bond at one specific adenosine on the 28S rRNA.. Functionally, the A subunit is responsible for inhibiting protein synthesis through the catalytic inactivation of 60S ribosomal subunits. After endocytosis, the A subunit is cleaved by furin in two fragments, A1 and A2: A1 is the catalytically active fragment, and A2 is essential for holotoxin assembly with the B subunits. This Escherichia coli O157:H7 (Bacteriophage 933W) protein is Shiga-like toxin 2 subunit A (stxA2).